Here is a 313-residue protein sequence, read N- to C-terminus: Glutathione S-transferase omega-like 2 (313 aa).

The active-site Nucleophile is Cys49. Positions 161–289 (PSSLRTKIDE…TDFKHIKCHY (129 aa)) constitute a GST C-terminal domain.

Belongs to the GST superfamily. Omega family.

It localises to the cytoplasm. It is found in the nucleus. Its subcellular location is the golgi apparatus. It catalyses the reaction RX + glutathione = an S-substituted glutathione + a halide anion + H(+). It carries out the reaction L-dehydroascorbate + 2 glutathione = glutathione disulfide + L-ascorbate. Its function is as follows. Active as '1-Cys' thiol transferase against beta-hydroxyethyl disulfide (HED), as dehydroascorbate reductase and as dimethylarsinic acid reductase, while not active against the standard GST substrate 1-chloro-2,4-dinitrobenzene (CDNB). May be involved in cell wall organization and biogenesis. The sequence is that of Glutathione S-transferase omega-like 2 (gto2) from Schizosaccharomyces pombe (strain 972 / ATCC 24843) (Fission yeast).